The primary structure comprises 131 residues: D-ribose pyranase (131 aa).

The active-site Proton donor is His20. Substrate is bound by residues Asp28, His98, and 120–122 (YAN).

Belongs to the RbsD / FucU family. RbsD subfamily. As to quaternary structure, homodecamer.

The protein localises to the cytoplasm. It carries out the reaction beta-D-ribopyranose = beta-D-ribofuranose. It functions in the pathway carbohydrate metabolism; D-ribose degradation; D-ribose 5-phosphate from beta-D-ribopyranose: step 1/2. Functionally, catalyzes the interconversion of beta-pyran and beta-furan forms of D-ribose. The polypeptide is D-ribose pyranase (Bacillus cytotoxicus (strain DSM 22905 / CIP 110041 / 391-98 / NVH 391-98)).